The primary structure comprises 110 residues: Glycine cleavage system H-like protein (110 aa).

The 88-residue stretch at 10-97 (VEKVGDLYVF…PEENWLFKLD (88 aa)) folds into the Lipoyl-binding domain. An ADP-ribosyl aspartic acid modification is found at D27. Position 56 is an N6-lipoyllysine (K56).

Lipoylated GcvH-L directly interacts with SAV0325, which reverses the SirTM-mediated mono-ADP-ribosylation of GcvH-L, and with the oxidoreductase SAV0322. Post-translationally, is lipoylated on K-56 by LplA2 (SAV0327) and then mono-ADP-ribosylated, probably on D-27, by SirTM (SAV0326). The mono-ADP-ribosylation state of GcvH-L might regulate the availability of the lipoyl moiety for redox reactions; ADP-ribosylation would inhibit the interaction of the oxidoreductase with GcvH-L when it is not required, thus ADP-ribosylation of GcvH-L might be acting to keep the response 'off' under non-stress conditions.

May act as a carrier protein for the ROS scavenging lipoyl moiety and/or as a substrate for oxidoreductases such as SAV0322 and SAV0323. This is Glycine cleavage system H-like protein from Staphylococcus aureus (strain Mu50 / ATCC 700699).